A 250-amino-acid polypeptide reads, in one-letter code: Phosphatidylglycerol--prolipoprotein diacylglyceryl transferase (250 aa).

4 helical membrane passes run 11–31 (LAIR…LLLA), 49–69 (FLIA…IFEF), 84–104 (QGGL…YIYL), and 109–129 (ESFF…QAIG). Arginine 130 is a binding site for a 1,2-diacyl-sn-glycero-3-phospho-(1'-sn-glycerol). 3 helical membrane-spanning segments follow: residues 169–189 (PTFL…VYLL), 196–216 (GIVF…IEGL), and 228–248 (VAQL…YNII).

Belongs to the Lgt family.

It localises to the cell membrane. The catalysed reaction is L-cysteinyl-[prolipoprotein] + a 1,2-diacyl-sn-glycero-3-phospho-(1'-sn-glycerol) = an S-1,2-diacyl-sn-glyceryl-L-cysteinyl-[prolipoprotein] + sn-glycerol 1-phosphate + H(+). The protein operates within protein modification; lipoprotein biosynthesis (diacylglyceryl transfer). Its function is as follows. Catalyzes the transfer of the diacylglyceryl group from phosphatidylglycerol to the sulfhydryl group of the N-terminal cysteine of a prolipoprotein, the first step in the formation of mature lipoproteins. The chain is Phosphatidylglycerol--prolipoprotein diacylglyceryl transferase from Clostridium botulinum (strain 657 / Type Ba4).